Here is a 183-residue protein sequence, read N- to C-terminus: Ribulose bisphosphate carboxylase small subunit, chloroplastic 3 (183 aa).

The transit peptide at 1 to 43 (MATTMLNRSVIVNKEVAKTPNFPRATKNNKGFASNAAVQKCRD) directs the protein to the chloroplast.

The protein belongs to the RuBisCO small chain family. Heterohexadecamer of 8 large and 8 small subunits.

Its subcellular location is the plastid. The protein localises to the chloroplast. Its function is as follows. RuBisCO catalyzes two reactions: the carboxylation of D-ribulose 1,5-bisphosphate, the primary event in carbon dioxide fixation, as well as the oxidative fragmentation of the pentose substrate. Both reactions occur simultaneously and in competition at the same active site. Although the small subunit is not catalytic it is essential for maximal activity. The protein is Ribulose bisphosphate carboxylase small subunit, chloroplastic 3 of Acetabularia peniculus (Green alga).